A 130-amino-acid chain; its full sequence is C-X-C motif chemokine 5 (130 aa).

Residues 1 to 37 (MSFQLRSSARIPSRSCSSFTLLAFLLLFTLPQHRAQA) form the signal peptide. 2 disulfide bridges follow: cysteine 50–cysteine 76 and cysteine 52–cysteine 93.

Belongs to the intercrine alpha (chemokine CxC) family. As to quaternary structure, monomer. Homodimer.

It localises to the secreted. Functionally, may participate in the recruitment of inflammatory cells by injured or infected tissue. The polypeptide is C-X-C motif chemokine 5 (Cxcl5) (Rattus norvegicus (Rat)).